A 365-amino-acid chain; its full sequence is Dehydroprecondylocarpine acetate synthase (365 aa).

Zn(2+) contacts are provided by Cys-105, Cys-108, Cys-111, and Cys-119. Asn-142 and Asn-147 each carry an N-linked (GlcNAc...) asparagine glycan. Residues Leu-194, Gly-196, Leu-197, Ser-216, Thr-217, Thr-218, Lys-221, Leu-279, Ala-281, Ser-303, Ala-305, and Arg-350 each coordinate NADP(+).

This sequence belongs to the zinc-containing alcohol dehydrogenase family. In terms of assembly, homodimer. Interaction with catharanthine synthase (CS) and tabersonine synthase (TS). Requires Zn(2+) as cofactor.

It is found in the cytoplasm. The protein localises to the cytosol. The enzyme catalyses dihydroprecondylocarpine acetate + NADP(+) = precondylocarpine acetate + NADPH + H(+). The protein operates within alkaloid biosynthesis. Component of the seco-iridoid and derivatives monoterpenoid indole alkaloids (MIAs, e.g. vinblastine, catharanthine, tabersonine, vincadifformine, vindoline, vincristine, quinine and strychnine) biosynthesis pathway. Catalyzes the non-canonical 1,4-reduction of an alpha,beta-unsaturated iminium moiety; by contrast with the classic alcohol dehydrogenase mechanism, this reaction does not require a catalytic zinc or proton relay. Converts precondylocarpine acetate to dihydroprecondylocarpine acetate, that is spontaneously converted into dehydrosecodine intermediate, precursor of angryline. May also trigger the non-stereoselective 1,4-reduction reaction at C15 of dehydrosecodine leading to the production of secodine, a precursor of vincadifformine. The polypeptide is Dehydroprecondylocarpine acetate synthase (Catharanthus roseus (Madagascar periwinkle)).